We begin with the raw amino-acid sequence, 1200 residues long: DNA polymerase subunit gamma-1 (1200 aa).

Disordered regions lie at residues 471-515 (QKKT…RPSM) and 667-688 (MDLS…SSEH). Positions 472 to 481 (KKTKISKKQK) are enriched in basic residues. Residues 494–512 (LVEDHNEDPGPPTEKEESR) show a composition bias toward basic and acidic residues.

The protein belongs to the DNA polymerase type-A family. In terms of assembly, heterotrimer composed of a catalytic subunit and a homodimer of accessory subunits. It depends on Mg(2+) as a cofactor.

The protein resides in the mitochondrion. It is found in the mitochondrion matrix. Its subcellular location is the mitochondrion nucleoid. It catalyses the reaction DNA(n) + a 2'-deoxyribonucleoside 5'-triphosphate = DNA(n+1) + diphosphate. Its function is as follows. Involved in the replication of mitochondrial DNA. Associates with mitochondrial DNA. The polypeptide is DNA polymerase subunit gamma-1 (polg) (Xenopus laevis (African clawed frog)).